A 353-amino-acid polypeptide reads, in one-letter code: Photosystem II protein D1 (353 aa).

An N-acetylthreonine modification is found at T2. Phosphothreonine is present on T2. The next 3 helical transmembrane spans lie at 29 to 46 (YIGWFGVIMIPTLLTATS), 118 to 133 (HFFIGICCYMGREWEL), and 142 to 156 (WIAVAYSAPVAAATA). H118 contacts chlorophyll a. Y126 is a binding site for pheophytin a. [CaMn4O5] cluster-binding residues include D170 and E189. Residues 197–218 (FHMLGVAGVFGGSLFSAMHGSL) traverse the membrane as a helical segment. H198 serves as a coordination point for chlorophyll a. A quinone-binding positions include H215 and 264-265 (SF). A Fe cation-binding site is contributed by H215. A Fe cation-binding site is contributed by H272. Residues 274-288 (FLAAWPVIGIWFTAL) traverse the membrane as a helical segment. Residues H332, E333, D342, and A344 each coordinate [CaMn4O5] cluster. The propeptide occupies 345-353 (AFEAPSINA).

This sequence belongs to the reaction center PufL/M/PsbA/D family. PSII is composed of 1 copy each of membrane proteins PsbA, PsbB, PsbC, PsbD, PsbE, PsbF, PsbH, PsbI, PsbJ, PsbK, PsbL, PsbM, PsbT, PsbX, PsbY, PsbZ, Psb30/Ycf12, at least 3 peripheral proteins of the oxygen-evolving complex and a large number of cofactors. It forms dimeric complexes. It depends on The D1/D2 heterodimer binds P680, chlorophylls that are the primary electron donor of PSII, and subsequent electron acceptors. It shares a non-heme iron and each subunit binds pheophytin, quinone, additional chlorophylls, carotenoids and lipids. D1 provides most of the ligands for the Mn4-Ca-O5 cluster of the oxygen-evolving complex (OEC). There is also a Cl(-1) ion associated with D1 and D2, which is required for oxygen evolution. The PSII complex binds additional chlorophylls, carotenoids and specific lipids. as a cofactor. Tyr-161 forms a radical intermediate that is referred to as redox-active TyrZ, YZ or Y-Z. Post-translationally, C-terminally processed by CTPA; processing is essential to allow assembly of the oxygen-evolving complex and thus photosynthetic growth.

It localises to the plastid. The protein localises to the chloroplast thylakoid membrane. The catalysed reaction is 2 a plastoquinone + 4 hnu + 2 H2O = 2 a plastoquinol + O2. Its function is as follows. Photosystem II (PSII) is a light-driven water:plastoquinone oxidoreductase that uses light energy to abstract electrons from H(2)O, generating O(2) and a proton gradient subsequently used for ATP formation. It consists of a core antenna complex that captures photons, and an electron transfer chain that converts photonic excitation into a charge separation. The D1/D2 (PsbA/PsbD) reaction center heterodimer binds P680, the primary electron donor of PSII as well as several subsequent electron acceptors. The sequence is that of Photosystem II protein D1 from Chlamydomonas moewusii (Chlamydomonas eugametos).